We begin with the raw amino-acid sequence, 113 residues long: U11-theraphotoxin-Hhn1a (113 aa).

A signal peptide spans 1–21; the sequence is MNTVRVTFLLVFVLAVSLGQA. The propeptide occupies 22–74; the sequence is DKDENRMEMQEKTEQGRSYLDFAENLLLQKLEELEAKLLEEDSEESRNSRQKR. Residues 61–83 are disordered; sequence EEDSEESRNSRQKRCIGEGVPCD. Cystine bridges form between Cys75–Cys90, Cys82–Cys95, and Cys89–Cys110.

Belongs to the neurotoxin 14 (magi-1) family. 01 (HNTX-16) subfamily. As to expression, expressed by the venom gland.

The protein localises to the secreted. Functionally, probable ion channel inhibitor. The polypeptide is U11-theraphotoxin-Hhn1a (Cyriopagopus hainanus (Chinese bird spider)).